The following is a 78-amino-acid chain: Small ribosomal subunit protein bS20 (78 aa).

The interval Lys-55–Lys-78 is disordered.

The protein belongs to the bacterial ribosomal protein bS20 family.

Its function is as follows. Binds directly to 16S ribosomal RNA. In Streptococcus mutans serotype c (strain ATCC 700610 / UA159), this protein is Small ribosomal subunit protein bS20.